The following is a 289-amino-acid chain: Light-independent protochlorophyllide reductase iron-sulfur ATP-binding protein (289 aa).

Residues 10–15 (GIGKST) and Lys39 contribute to the ATP site. A Mg(2+)-binding site is contributed by Ser14. Residues Cys95 and Cys129 each coordinate [4Fe-4S] cluster. 180-181 (NR) is a binding site for ATP.

The protein belongs to the NifH/BchL/ChlL family. In terms of assembly, homodimer. Protochlorophyllide reductase is composed of three subunits; ChlL, ChlN and ChlB. The cofactor is [4Fe-4S] cluster.

It is found in the plastid. The protein localises to the chloroplast. The enzyme catalyses chlorophyllide a + oxidized 2[4Fe-4S]-[ferredoxin] + 2 ADP + 2 phosphate = protochlorophyllide a + reduced 2[4Fe-4S]-[ferredoxin] + 2 ATP + 2 H2O. Its pathway is porphyrin-containing compound metabolism; chlorophyll biosynthesis (light-independent). Functionally, component of the dark-operative protochlorophyllide reductase (DPOR) that uses Mg-ATP and reduced ferredoxin to reduce ring D of protochlorophyllide (Pchlide) to form chlorophyllide a (Chlide). This reaction is light-independent. The L component serves as a unique electron donor to the NB-component of the complex, and binds Mg-ATP. In Tetradesmus obliquus (Green alga), this protein is Light-independent protochlorophyllide reductase iron-sulfur ATP-binding protein.